We begin with the raw amino-acid sequence, 576 residues long: MYRAAASLASKARQAGSSSAARQVGSRLAWSRNYAAKDIKFGVEARALMLRGVEELADAVKVTMGPKGRNVVIEQSFGAPKVTKDGVTVAKSIEFKDRVKNVGASLVKQVANATNDTAGDGTTCATVLTKAIFTEGCKSVAAGMNAMDLRRGISMAVDAVVTNLKGMARMISTSEEIAQVGTISANGEREIGELIAKAMEKVGKEGVITIADGNTLYNELEVVEGMKLDRGYISPYFITNSKAQKCELEDPLILIHDKKVTNMHAVVKVLEMALKKQRPLLIVAEDVESEALGTLIINKLRAGIKVCAVKAPGFGENRKANLQDLAILTGGEVITEELGMNLENVEPHMLGSCKKVTVSKDDTVILDGAGDKKSIEERADQIRSAVENSTSDYDKEKLQERLAKLSGGVAVLKIGGASEAEVGEKKDRVTDALNATKAAVEEGIVPGGGVALLYASKELDKLQTANFDQKIGVQIIQNALKTPVHTIASNAGVEGAVVVGKLLEQGNTDLGYDAAKDEYVDMVKAGIIDPLKVIRTALVDAASVSSLMTTTESIIVEIPKEEAPAPAMGGMGGMDY.

The N-terminal 34 residues, 1-34 (MYRAAASLASKARQAGSSSAARQVGSRLAWSRNY), are a transit peptide targeting the mitochondrion.

It belongs to the chaperonin (HSP60) family.

It localises to the mitochondrion. Implicated in mitochondrial protein import and macromolecular assembly. May facilitate the correct folding of imported proteins. May also prevent misfolding and promote the refolding and proper assembly of unfolded polypeptides generated under stress conditions in the mitochondrial matrix. In Zea mays (Maize), this protein is Chaperonin CPN60-2, mitochondrial (CPN60II).